Here is a 176-residue protein sequence, read N- to C-terminus: ATP synthase subunit b (176 aa).

Residues F18–V38 form a helical membrane-spanning segment.

The protein belongs to the ATPase B chain family. F-type ATPases have 2 components, F(1) - the catalytic core - and F(0) - the membrane proton channel. F(1) has five subunits: alpha(3), beta(3), gamma(1), delta(1), epsilon(1). F(0) has three main subunits: a(1), b(2) and c(10-14). The alpha and beta chains form an alternating ring which encloses part of the gamma chain. F(1) is attached to F(0) by a central stalk formed by the gamma and epsilon chains, while a peripheral stalk is formed by the delta and b chains.

Its subcellular location is the cell inner membrane. F(1)F(0) ATP synthase produces ATP from ADP in the presence of a proton or sodium gradient. F-type ATPases consist of two structural domains, F(1) containing the extramembraneous catalytic core and F(0) containing the membrane proton channel, linked together by a central stalk and a peripheral stalk. During catalysis, ATP synthesis in the catalytic domain of F(1) is coupled via a rotary mechanism of the central stalk subunits to proton translocation. In terms of biological role, component of the F(0) channel, it forms part of the peripheral stalk, linking F(1) to F(0). The polypeptide is ATP synthase subunit b (Sphingopyxis alaskensis (strain DSM 13593 / LMG 18877 / RB2256) (Sphingomonas alaskensis)).